The primary structure comprises 97 residues: DNA-directed RNA polymerase subunit omega (97 aa).

Belongs to the RNA polymerase subunit omega family. In terms of assembly, the RNAP catalytic core consists of 2 alpha, 1 beta, 1 beta' and 1 omega subunit. When a sigma factor is associated with the core the holoenzyme is formed, which can initiate transcription.

The catalysed reaction is RNA(n) + a ribonucleoside 5'-triphosphate = RNA(n+1) + diphosphate. Its function is as follows. Promotes RNA polymerase assembly. Latches the N- and C-terminal regions of the beta' subunit thereby facilitating its interaction with the beta and alpha subunits. This Coxiella burnetii (strain CbuK_Q154) (Coxiella burnetii (strain Q154)) protein is DNA-directed RNA polymerase subunit omega.